Here is a 526-residue protein sequence, read N- to C-terminus: ATP synthase subunit alpha (526 aa).

171 to 178 (GDRQTGKT) provides a ligand contact to ATP.

It belongs to the ATPase alpha/beta chains family. As to quaternary structure, F-type ATPases have 2 components, CF(1) - the catalytic core - and CF(0) - the membrane proton channel. CF(1) has five subunits: alpha(3), beta(3), gamma(1), delta(1), epsilon(1). CF(0) has three main subunits: a(1), b(2) and c(9-12). The alpha and beta chains form an alternating ring which encloses part of the gamma chain. CF(1) is attached to CF(0) by a central stalk formed by the gamma and epsilon chains, while a peripheral stalk is formed by the delta and b chains.

The protein localises to the cell inner membrane. It catalyses the reaction ATP + H2O + 4 H(+)(in) = ADP + phosphate + 5 H(+)(out). Its function is as follows. Produces ATP from ADP in the presence of a proton gradient across the membrane. The alpha chain is a regulatory subunit. The chain is ATP synthase subunit alpha from Cytophaga hutchinsonii (strain ATCC 33406 / DSM 1761 / CIP 103989 / NBRC 15051 / NCIMB 9469 / D465).